A 352-amino-acid chain; its full sequence is Selenide, water dikinase (352 aa).

Cys23 is an active-site residue. ATP is bound by residues Lys26 and 54-56; that span reads SRD. Residue Asp57 participates in Mg(2+) binding. ATP is bound by residues Asp74, Asp97, and 145–147; that span reads GHS. Asp97 provides a ligand contact to Mg(2+). Asp233 is a binding site for Mg(2+).

The protein belongs to the selenophosphate synthase 1 family. Class I subfamily. Homodimer. It depends on Mg(2+) as a cofactor.

The catalysed reaction is hydrogenselenide + ATP + H2O = selenophosphate + AMP + phosphate + 2 H(+). Its function is as follows. Synthesizes selenophosphate from selenide and ATP. This chain is Selenide, water dikinase, found in Shewanella putrefaciens (strain CN-32 / ATCC BAA-453).